The chain runs to 179 residues: Adenine phosphoribosyltransferase (179 aa).

This sequence belongs to the purine/pyrimidine phosphoribosyltransferase family. Homodimer.

The protein resides in the cytoplasm. The catalysed reaction is AMP + diphosphate = 5-phospho-alpha-D-ribose 1-diphosphate + adenine. It participates in purine metabolism; AMP biosynthesis via salvage pathway; AMP from adenine: step 1/1. In terms of biological role, catalyzes a salvage reaction resulting in the formation of AMP, that is energically less costly than de novo synthesis. The sequence is that of Adenine phosphoribosyltransferase from Beijerinckia indica subsp. indica (strain ATCC 9039 / DSM 1715 / NCIMB 8712).